Consider the following 544-residue polypeptide: Chaperonin GroEL (544 aa).

ATP is bound by residues 29–32 (TLGP), 86–90 (DGTTT), glycine 413, 476–478 (NAA), and aspartate 492.

It belongs to the chaperonin (HSP60) family. In terms of assembly, forms a cylinder of 14 subunits composed of two heptameric rings stacked back-to-back. Interacts with the co-chaperonin GroES.

It localises to the cytoplasm. It catalyses the reaction ATP + H2O + a folded polypeptide = ADP + phosphate + an unfolded polypeptide.. Its function is as follows. Together with its co-chaperonin GroES, plays an essential role in assisting protein folding. The GroEL-GroES system forms a nano-cage that allows encapsulation of the non-native substrate proteins and provides a physical environment optimized to promote and accelerate protein folding. This is Chaperonin GroEL from Bacillus velezensis (strain DSM 23117 / BGSC 10A6 / LMG 26770 / FZB42) (Bacillus amyloliquefaciens subsp. plantarum).